A 154-amino-acid polypeptide reads, in one-letter code: Protein LOL1 (154 aa).

Putative zinc finger stretches follow at residues glutamine 34–valine 64, glutamine 73–alanine 103, and histidine 111–valine 141.

Its subcellular location is the nucleus. Its function is as follows. Positive regulator of reactive oxygen-induced cell death. May be involved in the repression of the copper/zinc superoxide dismutase CSD1 and CSD2 that detoxify accumulating superoxide before the reactive oxygen species (ROS) can trigger a cell death cascade. LSD1 and LOL1 have antagonistic effects on CSD1 and CSD2 accumulation to regulate oxidative stress-induced cell death. The sequence is that of Protein LOL1 (LOL1) from Arabidopsis thaliana (Mouse-ear cress).